A 146-amino-acid polypeptide reads, in one-letter code: Hemoglobin subunit beta-2 (146 aa).

The 145-residue stretch at 2–146 (EWTDFERATI…VVSSLGRQYH (145 aa)) folds into the Globin domain. 2 residues coordinate heme b: His63 and His92.

Belongs to the globin family. In terms of assembly, hb 2 is a heterotetramer of two alpha-2 and two beta-2 chains. As to expression, red blood cells.

Functionally, involved in oxygen transport from gills to the various peripheral tissues. This chain is Hemoglobin subunit beta-2 (hbb2), found in Gobionotothen gibberifrons (Humped rockcod).